We begin with the raw amino-acid sequence, 730 residues long: Rap1 GTPase-activating protein 2 (730 aa).

Residues 247–463 form the Rap-GAP domain; that stretch reads IVAYDEHEVN…RTRAALLDNL (217 aa). Disordered stretches follow at residues 510 to 668 and 698 to 730; these read MVGS…STAS and SRSP…STSH. Polar residues-rich tracts occupy residues 535-557 and 597-612; these read GEVT…QSRS and HSSQ…NPSS. The segment covering 617 to 630 has biased composition (basic and acidic residues); sequence PNKDRPFVKLKENG. The span at 631–651 shows a compositional bias: low complexity; the sequence is RSNISRSSSSTSSFSSTAGES. Over residues 699-712 the composition is skewed to polar residues; the sequence is RSPTDIKNRNSPRS.

It localises to the cytoplasm. GTPase activator for the nuclear Ras-related regulatory protein RAP-1A (KREV-1), converting it to the putatively inactive GDP-bound state. The sequence is that of Rap1 GTPase-activating protein 2 (RAP1GAP2) from Gallus gallus (Chicken).